The primary structure comprises 347 residues: Protein RecA (347 aa).

65-72 (GPESSGKT) lines the ATP pocket.

The protein belongs to the RecA family.

The protein localises to the cytoplasm. In terms of biological role, can catalyze the hydrolysis of ATP in the presence of single-stranded DNA, the ATP-dependent uptake of single-stranded DNA by duplex DNA, and the ATP-dependent hybridization of homologous single-stranded DNAs. It interacts with LexA causing its activation and leading to its autocatalytic cleavage. In Aliivibrio salmonicida (strain LFI1238) (Vibrio salmonicida (strain LFI1238)), this protein is Protein RecA.